We begin with the raw amino-acid sequence, 347 residues long: DNA-directed RNA polymerase subunit alpha (347 aa).

The alpha N-terminal domain (alpha-NTD) stretch occupies residues 1–226; sequence MLISQRPTLS…ELFGLARELN (226 aa). Residues 241 to 347 are alpha C-terminal domain (alpha-CTD); sequence ADHIASFALP…DQDYAETEQL (107 aa).

The protein belongs to the RNA polymerase alpha chain family. In terms of assembly, homodimer. The RNAP catalytic core consists of 2 alpha, 1 beta, 1 beta' and 1 omega subunit. When a sigma factor is associated with the core the holoenzyme is formed, which can initiate transcription.

It carries out the reaction RNA(n) + a ribonucleoside 5'-triphosphate = RNA(n+1) + diphosphate. Its function is as follows. DNA-dependent RNA polymerase catalyzes the transcription of DNA into RNA using the four ribonucleoside triphosphates as substrates. The protein is DNA-directed RNA polymerase subunit alpha of Mycobacterium ulcerans (strain Agy99).